A 118-amino-acid polypeptide reads, in one-letter code: Thioredoxin AMT13 (118 aa).

The region spanning methionine 1–glycine 110 is the Thioredoxin domain. A disulfide bridge links cysteine 36 with cysteine 39.

The protein belongs to the thioredoxin family.

The protein operates within mycotoxin biosynthesis. In terms of biological role, thioredoxin; part of the gene clusters that mediate the biosynthesis of AM-toxins, host-selective toxins (HSTs) causing Alternaria blotch on apple, a worldwide distributed disease. AM-toxins are cyclic depsipeptides containing the 3 residues 2-hydroxy-isovaleric acid (2-HIV), dehydroalanine, L-alanine which are common for all 3 AM-toxins I to III. The fourth precursor is L-alpha-amino-methoxyphenyl-valeric acid (L-Amv) for AM-toxin I, L-alpha-amino-phenyl-valeric acid (L-Apv) for AM-toxin II, and L-alpha-amino-hydroxyphenyl-valeric acid (L-Ahv) for AM-toxin III. AM-toxins have two target sites for affecting susceptible apple cells; they cause invagination of the plasma membrane and electrolyte loss and chloroplast disorganization. The non-ribosomal peptide synthetase AMT1 contains 4 catalytic modules and is responsible for activation of each residue in AM-toxin. The aldo-keto reductase AMT2 catalyzes the conversion of 2-keto-isovaleric acid (2-KIV) to 2-hydroxy-isovaleric acid (2-HIV), one of the precursor residues incorporated by AMT1 during AM-toxin biosynthesis, by reduction of its ketone to an alcohol. The cytochrome P450 monooxygenase AMT3 and the thioesterase AMT4 are also important for AM-toxin production, but their exact function within the AM-toxin biosynthesis are not known yet. Up to 21 proteins (including AMT1 to AMT4) are predicted to be involved in AM-toxin biosynthesis since their expression ishighly up-regulated in AM-toxin-producing cultures. This Alternaria alternata (Alternaria rot fungus) protein is Thioredoxin AMT13.